The sequence spans 143 residues: Transcriptional regulator MraZ (143 aa).

SpoVT-AbrB domains lie at 5-47 (EYQH…PQEE) and 76-119 (ASEC…SKSE).

This sequence belongs to the MraZ family. In terms of assembly, forms oligomers.

The protein resides in the cytoplasm. The protein localises to the nucleoid. The polypeptide is Transcriptional regulator MraZ (Listeria welshimeri serovar 6b (strain ATCC 35897 / DSM 20650 / CCUG 15529 / CIP 8149 / NCTC 11857 / SLCC 5334 / V8)).